A 93-amino-acid polypeptide reads, in one-letter code: Em protein (93 aa).

The tract at residues 1-93 (MASGQQERSQ…IDESKFKTKS (93 aa)) is disordered. 3 stretches are compositionally biased toward basic and acidic residues: residues 9–19 (SQLDRKAREGE), 38–52 (AEGRSRGGQTRREQM), and 73–93 (GGDRAAREGIDIDESKFKTKS).

It belongs to the small hydrophilic plant seed protein family.

In terms of biological role, it is thought to provide protection for the cytoplasm during the desiccation stage of embryo development. The polypeptide is Em protein (EM) (Triticum aestivum (Wheat)).